We begin with the raw amino-acid sequence, 248 residues long: Putative glutamine amidotransferase-like protein C13C5.04 (248 aa).

One can recognise a Glutamine amidotransferase type-1 domain in the interval 13-217 (PMVEITSAYG…VKVLRGTEVF (205 aa)).

The chain is Putative glutamine amidotransferase-like protein C13C5.04 from Schizosaccharomyces pombe (strain 972 / ATCC 24843) (Fission yeast).